Consider the following 465-residue polypeptide: Ribulose bisphosphate carboxylase large chain (465 aa).

Lysine 4 is modified (N6,N6,N6-trimethyllysine). Residues asparagine 113 and threonine 163 each coordinate substrate. Lysine 165 serves as the catalytic Proton acceptor. Lysine 167 is a binding site for substrate. The Mg(2+) site is built by lysine 191, aspartate 193, and glutamate 194. Lysine 191 is subject to N6-carboxylysine. The Proton acceptor role is filled by histidine 284. Substrate-binding residues include arginine 285, histidine 317, and serine 369.

It belongs to the RuBisCO large chain family. Type I subfamily. In terms of assembly, heterohexadecamer of 8 large chains and 8 small chains; disulfide-linked. The disulfide link is formed within the large subunit homodimers. The cofactor is Mg(2+). The disulfide bond which can form in the large chain dimeric partners within the hexadecamer appears to be associated with oxidative stress and protein turnover.

The protein localises to the plastid. The protein resides in the chloroplast. The catalysed reaction is 2 (2R)-3-phosphoglycerate + 2 H(+) = D-ribulose 1,5-bisphosphate + CO2 + H2O. It carries out the reaction D-ribulose 1,5-bisphosphate + O2 = 2-phosphoglycolate + (2R)-3-phosphoglycerate + 2 H(+). In terms of biological role, ruBisCO catalyzes two reactions: the carboxylation of D-ribulose 1,5-bisphosphate, the primary event in carbon dioxide fixation, as well as the oxidative fragmentation of the pentose substrate in the photorespiration process. Both reactions occur simultaneously and in competition at the same active site. The protein is Ribulose bisphosphate carboxylase large chain of Morella cerifera (Wax myrtle).